A 308-amino-acid chain; its full sequence is tRNA dimethylallyltransferase (308 aa).

Glycine 10–threonine 17 contributes to the ATP binding site. Threonine 12–threonine 17 provides a ligand contact to substrate. Residues aspartate 35–glutamine 38 form an interaction with substrate tRNA region.

This sequence belongs to the IPP transferase family. As to quaternary structure, monomer. Mg(2+) serves as cofactor.

The catalysed reaction is adenosine(37) in tRNA + dimethylallyl diphosphate = N(6)-dimethylallyladenosine(37) in tRNA + diphosphate. In terms of biological role, catalyzes the transfer of a dimethylallyl group onto the adenine at position 37 in tRNAs that read codons beginning with uridine, leading to the formation of N6-(dimethylallyl)adenosine (i(6)A). The sequence is that of tRNA dimethylallyltransferase from Fervidobacterium nodosum (strain ATCC 35602 / DSM 5306 / Rt17-B1).